The sequence spans 122 residues: Large ribosomal subunit protein uL14 (122 aa).

Belongs to the universal ribosomal protein uL14 family. As to quaternary structure, part of the 50S ribosomal subunit. Forms a cluster with proteins L3 and L19. In the 70S ribosome, L14 and L19 interact and together make contacts with the 16S rRNA in bridges B5 and B8.

Its function is as follows. Binds to 23S rRNA. Forms part of two intersubunit bridges in the 70S ribosome. The chain is Large ribosomal subunit protein uL14 from Pseudomonas savastanoi pv. phaseolicola (strain 1448A / Race 6) (Pseudomonas syringae pv. phaseolicola (strain 1448A / Race 6)).